We begin with the raw amino-acid sequence, 197 residues long: Prefoldin subunit 3 (197 aa).

Ala2 carries the N-acetylalanine modification. Lys59 bears the N6-acetyllysine mark.

The protein belongs to the prefoldin subunit alpha family. Heterohexamer of two PFD-alpha type and four PFD-beta type subunits. Binds to the C-terminal part of VHL. Ubiquitous.

It localises to the cytoplasm. The protein resides in the nucleus. Functionally, binds specifically to cytosolic chaperonin (c-CPN) and transfers target proteins to it. Binds to nascent polypeptide chain and promotes folding in an environment in which there are many competing pathways for nonnative proteins. The chain is Prefoldin subunit 3 (VBP1) from Homo sapiens (Human).